Reading from the N-terminus, the 149-residue chain is Transcriptional repressor NrdR (149 aa).

Residues 3–34 fold into a zinc finger; it reads CPFCAAVDTKVIDSRLVSDGSQVRRRRQCLDC. An ATP-cone domain is found at 49-139; the sequence is PRVIKSDDVR…VYRSFEDIRE (91 aa).

Belongs to the NrdR family. It depends on Zn(2+) as a cofactor.

Negatively regulates transcription of bacterial ribonucleotide reductase nrd genes and operons by binding to NrdR-boxes. The protein is Transcriptional repressor NrdR of Yersinia enterocolitica serotype O:8 / biotype 1B (strain NCTC 13174 / 8081).